The following is a 371-amino-acid chain: UDP-N-acetylglucosamine--N-acetylmuramyl-(pentapeptide) pyrophosphoryl-undecaprenol N-acetylglucosamine transferase (371 aa).

UDP-N-acetyl-alpha-D-glucosamine is bound by residues 15–17, Asn126, Arg172, Ser199, Ile256, 275–280, and Gln301; these read TGG and ALTVSE.

Belongs to the glycosyltransferase 28 family. MurG subfamily.

It localises to the cell inner membrane. The catalysed reaction is di-trans,octa-cis-undecaprenyl diphospho-N-acetyl-alpha-D-muramoyl-L-alanyl-D-glutamyl-meso-2,6-diaminopimeloyl-D-alanyl-D-alanine + UDP-N-acetyl-alpha-D-glucosamine = di-trans,octa-cis-undecaprenyl diphospho-[N-acetyl-alpha-D-glucosaminyl-(1-&gt;4)]-N-acetyl-alpha-D-muramoyl-L-alanyl-D-glutamyl-meso-2,6-diaminopimeloyl-D-alanyl-D-alanine + UDP + H(+). Its pathway is cell wall biogenesis; peptidoglycan biosynthesis. Functionally, cell wall formation. Catalyzes the transfer of a GlcNAc subunit on undecaprenyl-pyrophosphoryl-MurNAc-pentapeptide (lipid intermediate I) to form undecaprenyl-pyrophosphoryl-MurNAc-(pentapeptide)GlcNAc (lipid intermediate II). The protein is UDP-N-acetylglucosamine--N-acetylmuramyl-(pentapeptide) pyrophosphoryl-undecaprenol N-acetylglucosamine transferase of Francisella philomiragia subsp. philomiragia (strain ATCC 25017 / CCUG 19701 / FSC 153 / O#319-036).